The primary structure comprises 326 residues: Flavanone 3-dioxygenase 3 (326 aa).

Over residues 1–15 (MSDTSKGIPQEQLPS) the composition is skewed to polar residues. The tract at residues 1–21 (MSDTSKGIPQEQLPSQELHPP) is disordered. The region spanning 175–276 (EGLQLLSVNC…RISLASIHGF (102 aa)) is the Fe2OG dioxygenase domain. H200, D202, and H257 together coordinate Fe cation. Position 267 (R267) interacts with 2-oxoglutarate.

The protein belongs to the iron/ascorbate-dependent oxidoreductase family. Fe(2+) serves as cofactor. The cofactor is L-ascorbate. As to expression, expressed at very low levels in roots, leaves, stems and seeds.

It catalyses the reaction a (2S)-flavan-4-one + 2-oxoglutarate + O2 = a (2R,3R)-dihydroflavonol + succinate + CO2. It participates in secondary metabolite biosynthesis; flavonoid biosynthesis. Catalyzes the 3-beta-hydroxylation of 2S-flavanones to 2R,3R-dihydroflavonols which are intermediates in the biosynthesis of flavonols, anthocyanidins, catechins and proanthocyanidins in plants. Converts (2S)-eriodictyol to (+)-taxifolin and (2S)-naringenin to (+)-(2R/3R)-dihydrokaempferol in vitro. The polypeptide is Flavanone 3-dioxygenase 3 (Oryza sativa subsp. japonica (Rice)).